The chain runs to 370 residues: MKFIDEARIEVIAGDGGDGSASMRREKFVPFGGPDGGDGGRGGSVYAVADRNINTLIDYRYSKKHQARNGENGRGSDCYGKGGDDITLRMPVGTIITDMDTGELIADLTEHNQTVRIAEGGAGGLGNLHFKSSTNRAPRQKTDGKPGERRMVRLELKVLADVGLLGMPNAGKSTFISSVSNAKPKIADYPFTTLAPNLGVVRVGPSRSFVIADIPGLIEGAAEGAGLGHQFLRHLQRTGLLLHIVDLAPFDETVDPVAEAKAIVNELRKYDEELFSKPRWLVLNKLDMVPEDEREARVAAFLKDFEWDGPVFEISALTGQGCENLCYAVYDYLAEHSDAQRAAEAEDLAADVRFRGQQQGDANAPVGPQE.

The region spanning 1-159 is the Obg domain; sequence MKFIDEARIE…RMVRLELKVL (159 aa). Positions 127–147 are disordered; sequence NLHFKSSTNRAPRQKTDGKPG. An OBG-type G domain is found at 160–334; the sequence is ADVGLLGMPN…LCYAVYDYLA (175 aa). GTP-binding positions include 166–173, 191–195, 213–216, 284–287, and 315–317; these read GMPNAGKS, FTTLA, DIPG, NKLD, and SAL. Residues S173 and T193 each coordinate Mg(2+).

It belongs to the TRAFAC class OBG-HflX-like GTPase superfamily. OBG GTPase family. As to quaternary structure, monomer. Mg(2+) serves as cofactor.

It is found in the cytoplasm. Functionally, an essential GTPase which binds GTP, GDP and possibly (p)ppGpp with moderate affinity, with high nucleotide exchange rates and a fairly low GTP hydrolysis rate. Plays a role in control of the cell cycle, stress response, ribosome biogenesis and in those bacteria that undergo differentiation, in morphogenesis control. This chain is GTPase Obg, found in Paraburkholderia phymatum (strain DSM 17167 / CIP 108236 / LMG 21445 / STM815) (Burkholderia phymatum).